The primary structure comprises 1151 residues: UDP-N-acetylglucosamine--peptide N-acetylglucosaminyltransferase (1151 aa).

TPR repeat units lie at residues 125–158 (LKKV…DPNN), 193–226 (AEAY…KPEF), 227–260 (IDAY…NPDL), 261–294 (YCVR…QPQF), 295–328 (AVAW…DPNF), 329–362 (LDAY…SGNH), 363–396 (AVVH…QPHF), 397–430 (PDAY…CPTH), 431–464 (ADSQ…YPEF), 465–498 (AAAH…APTF), 499–532 (ADAY…NPAF), and 533–566 (ADAH…KPDF). Residues 567–577 (PDAYCNLAHCH) form a TPR 13; truncated repeat. The short motif at 591 to 607 (RKLVQIVEDQLCKKRLP) is the Nuclear localization signal element. The Proton acceptor role is filled by histidine 612. Residues glutamine 954, lysine 957, 1010–1013 (VAAK), 1016–1019 (HVRR), 1034–1036 (GHT), and aspartate 1040 contribute to the UDP site.

The protein belongs to the glycosyltransferase 41 family. O-GlcNAc transferase subfamily.

Its subcellular location is the nucleus. It is found in the cytoplasm. The protein resides in the perinuclear region. It catalyses the reaction L-seryl-[protein] + UDP-N-acetyl-alpha-D-glucosamine = 3-O-(N-acetyl-beta-D-glucosaminyl)-L-seryl-[protein] + UDP + H(+). The catalysed reaction is L-threonyl-[protein] + UDP-N-acetyl-alpha-D-glucosamine = 3-O-(N-acetyl-beta-D-glucosaminyl)-L-threonyl-[protein] + UDP + H(+). It functions in the pathway protein modification; protein glycosylation. Functionally, addition of nucleotide-activated sugars directly onto the polypeptide through O-glycosidic linkage with the hydroxyl of serine or threonine. Influences tap habituation in the mechanosensory neurons cell autonomously. The sequence is that of UDP-N-acetylglucosamine--peptide N-acetylglucosaminyltransferase (ogt-1) from Caenorhabditis elegans.